We begin with the raw amino-acid sequence, 713 residues long: Ribosomal RNA large subunit methyltransferase K/L (713 aa).

The 112-residue stretch at 43–154 folds into the THUMP domain; it reads LAYRITLWTR…NGVITIAMNF (112 aa).

This sequence belongs to the methyltransferase superfamily. RlmKL family.

It is found in the cytoplasm. It catalyses the reaction guanosine(2445) in 23S rRNA + S-adenosyl-L-methionine = N(2)-methylguanosine(2445) in 23S rRNA + S-adenosyl-L-homocysteine + H(+). The enzyme catalyses guanosine(2069) in 23S rRNA + S-adenosyl-L-methionine = N(2)-methylguanosine(2069) in 23S rRNA + S-adenosyl-L-homocysteine + H(+). In terms of biological role, specifically methylates the guanine in position 2445 (m2G2445) and the guanine in position 2069 (m7G2069) of 23S rRNA. This Shewanella sp. (strain MR-7) protein is Ribosomal RNA large subunit methyltransferase K/L.